Consider the following 506-residue polypeptide: BTB/POZ domain-containing protein 16 (506 aa).

A BTB domain is found at 150–206; it reads INDPAVTRVAFALALKNLYMNEVEMTVDNVLGVLASAHILQFNRLFRKCVSTMLNRL.

This Rattus norvegicus (Rat) protein is BTB/POZ domain-containing protein 16 (Btbd16).